The following is a 348-amino-acid chain: Probable protein phosphatase 2C 35 (348 aa).

Residues 11–24 (RYPSSSSDGDSRGP) are compositionally biased toward low complexity. The tract at residues 11-40 (RYPSSSSDGDSRGPLEANGVLKGKDQKPLG) is disordered. The PPM-type phosphatase domain maps to 52 to 342 (VYSVLSQRGY…DDITIIIVQI (291 aa)). The Mn(2+) site is built by aspartate 93, glycine 94, aspartate 289, and aspartate 333.

It belongs to the PP2C family. Mg(2+) is required as a cofactor. The cofactor is Mn(2+).

It carries out the reaction O-phospho-L-seryl-[protein] + H2O = L-seryl-[protein] + phosphate. The enzyme catalyses O-phospho-L-threonyl-[protein] + H2O = L-threonyl-[protein] + phosphate. This is Probable protein phosphatase 2C 35 from Arabidopsis thaliana (Mouse-ear cress).